The primary structure comprises 194 residues: Peptidyl-tRNA hydrolase (194 aa).

Tyr-17 provides a ligand contact to tRNA. The active-site Proton acceptor is the His-22. The tRNA site is built by Phe-68, Asn-70, and Asn-116.

This sequence belongs to the PTH family. Monomer.

It is found in the cytoplasm. It catalyses the reaction an N-acyl-L-alpha-aminoacyl-tRNA + H2O = an N-acyl-L-amino acid + a tRNA + H(+). Functionally, hydrolyzes ribosome-free peptidyl-tRNAs (with 1 or more amino acids incorporated), which drop off the ribosome during protein synthesis, or as a result of ribosome stalling. In terms of biological role, catalyzes the release of premature peptidyl moieties from peptidyl-tRNA molecules trapped in stalled 50S ribosomal subunits, and thus maintains levels of free tRNAs and 50S ribosomes. The polypeptide is Peptidyl-tRNA hydrolase (Glaesserella parasuis serovar 5 (strain SH0165) (Haemophilus parasuis)).